Consider the following 165-residue polypeptide: Large ribosomal subunit protein uL15 (165 aa).

Positions 1–44 are disordered; sequence MSLNQLKAPRGANRAKKRVGRGQGSGLGKTAGRGGKGQKARSGN. Residues 21-37 show a composition bias toward gly residues; the sequence is RGQGSGLGKTAGRGGKG.

Belongs to the universal ribosomal protein uL15 family. Part of the 50S ribosomal subunit.

In terms of biological role, binds to the 23S rRNA. In Anaeromyxobacter dehalogenans (strain 2CP-C), this protein is Large ribosomal subunit protein uL15.